Consider the following 130-residue polypeptide: Small ribosomal subunit protein uS11 (130 aa).

Belongs to the universal ribosomal protein uS11 family. Part of the 30S ribosomal subunit. Interacts with proteins S7 and S18. Binds to IF-3.

Located on the platform of the 30S subunit, it bridges several disparate RNA helices of the 16S rRNA. Forms part of the Shine-Dalgarno cleft in the 70S ribosome. In Campylobacter hominis (strain ATCC BAA-381 / DSM 21671 / CCUG 45161 / LMG 19568 / NCTC 13146 / CH001A), this protein is Small ribosomal subunit protein uS11.